The primary structure comprises 186 residues: Translation initiation factor IF-3 (186 aa).

The tract at residues 1 to 20 is disordered; the sequence is MINRSAGKDRDRSRSGDKEL.

It belongs to the IF-3 family. Monomer.

It is found in the cytoplasm. Its function is as follows. IF-3 binds to the 30S ribosomal subunit and shifts the equilibrium between 70S ribosomes and their 50S and 30S subunits in favor of the free subunits, thus enhancing the availability of 30S subunits on which protein synthesis initiation begins. This Borrelia hermsii (strain HS1 / DAH) protein is Translation initiation factor IF-3.